Here is a 251-residue protein sequence, read N- to C-terminus: Triosephosphate isomerase (251 aa).

Residue 8-10 participates in substrate binding; that stretch reads NWK. His-97 functions as the Electrophile in the catalytic mechanism. The active-site Proton acceptor is Glu-170. Substrate contacts are provided by residues Gly-176, Ser-215, and 236–237; that span reads GG.

This sequence belongs to the triosephosphate isomerase family. Homodimer.

The protein localises to the cytoplasm. It catalyses the reaction D-glyceraldehyde 3-phosphate = dihydroxyacetone phosphate. It functions in the pathway carbohydrate biosynthesis; gluconeogenesis. It participates in carbohydrate degradation; glycolysis; D-glyceraldehyde 3-phosphate from glycerone phosphate: step 1/1. Its function is as follows. Involved in the gluconeogenesis. Catalyzes stereospecifically the conversion of dihydroxyacetone phosphate (DHAP) to D-glyceraldehyde-3-phosphate (G3P). This is Triosephosphate isomerase from Nitratidesulfovibrio vulgaris (strain ATCC 29579 / DSM 644 / CCUG 34227 / NCIMB 8303 / VKM B-1760 / Hildenborough) (Desulfovibrio vulgaris).